The following is a 235-amino-acid chain: Type III pantothenate kinase (235 aa).

Residue 6-13 (DVGNNYIK) coordinates ATP. Substrate-binding positions include tyrosine 81 and 88-91 (GTDR). The active-site Proton acceptor is aspartate 90. Aspartate 111 is a K(+) binding site. Threonine 114 provides a ligand contact to ATP. Threonine 166 is a substrate binding site.

The protein belongs to the type III pantothenate kinase family. Homodimer. The cofactor is NH4(+). K(+) is required as a cofactor.

It localises to the cytoplasm. It carries out the reaction (R)-pantothenate + ATP = (R)-4'-phosphopantothenate + ADP + H(+). It participates in cofactor biosynthesis; coenzyme A biosynthesis; CoA from (R)-pantothenate: step 1/5. Its function is as follows. Catalyzes the phosphorylation of pantothenate (Pan), the first step in CoA biosynthesis. The chain is Type III pantothenate kinase from Cytophaga hutchinsonii (strain ATCC 33406 / DSM 1761 / CIP 103989 / NBRC 15051 / NCIMB 9469 / D465).